The sequence spans 254 residues: Isoprenyl transferase (254 aa).

Residue D12 is part of the active site. A Mg(2+)-binding site is contributed by D12. Residues 13–16 (GNGR), W17, R25, H29, and 57–59 (SSE) each bind substrate. N60 serves as the catalytic Proton acceptor. Residues W61, R63, R180, and 186-188 (RLS) each bind substrate. Position 199 (E199) interacts with Mg(2+).

The protein belongs to the UPP synthase family. In terms of assembly, homodimer. Mg(2+) serves as cofactor.

In terms of biological role, catalyzes the condensation of isopentenyl diphosphate (IPP) with allylic pyrophosphates generating different type of terpenoids. The sequence is that of Isoprenyl transferase from Brucella abortus biovar 1 (strain 9-941).